The chain runs to 179 residues: Small ribosomal subunit protein uS5 (179 aa).

Residues 22 to 85 (MIEKLVAVNR…EYARKRMSNV (64 aa)) form the S5 DRBM domain.

This sequence belongs to the universal ribosomal protein uS5 family. As to quaternary structure, part of the 30S ribosomal subunit. Contacts proteins S4 and S8.

With S4 and S12 plays an important role in translational accuracy. Functionally, located at the back of the 30S subunit body where it stabilizes the conformation of the head with respect to the body. The sequence is that of Small ribosomal subunit protein uS5 from Xylella fastidiosa (strain M23).